Reading from the N-terminus, the 124-residue chain is Small ribosomal subunit protein uS13 (124 aa).

The segment covering 94–117 has biased composition (basic residues); that stretch reads NLPVRGQRTRTNARTRKGPRKTVA. The tract at residues 94-124 is disordered; it reads NLPVRGQRTRTNARTRKGPRKTVANKKIESK.

Belongs to the universal ribosomal protein uS13 family. In terms of assembly, part of the 30S ribosomal subunit. Forms a loose heterodimer with protein S19. Forms two bridges to the 50S subunit in the 70S ribosome.

Its function is as follows. Located at the top of the head of the 30S subunit, it contacts several helices of the 16S rRNA. In the 70S ribosome it contacts the 23S rRNA (bridge B1a) and protein L5 of the 50S subunit (bridge B1b), connecting the 2 subunits; these bridges are implicated in subunit movement. Contacts the tRNAs in the A and P-sites. The polypeptide is Small ribosomal subunit protein uS13 (Mycoplasma pneumoniae (strain ATCC 29342 / M129 / Subtype 1) (Mycoplasmoides pneumoniae)).